A 187-amino-acid chain; its full sequence is UPF0301 protein YqgE (187 aa).

It belongs to the UPF0301 (AlgH) family.

This chain is UPF0301 protein YqgE, found in Salmonella choleraesuis (strain SC-B67).